The primary structure comprises 250 residues: Geranylgeranylglyceryl phosphate synthase (250 aa).

Aspartate 23 and serine 52 together coordinate Mg(2+). Sn-glycerol 1-phosphate is bound by residues 170–176, 202–203, and 224–225; these read YIEAGSG, GG, and GT.

It belongs to the GGGP/HepGP synthase family. Group II subfamily. Mg(2+) serves as cofactor.

It localises to the cytoplasm. It carries out the reaction sn-glycerol 1-phosphate + (2E,6E,10E)-geranylgeranyl diphosphate = sn-3-O-(geranylgeranyl)glycerol 1-phosphate + diphosphate. Its pathway is membrane lipid metabolism; glycerophospholipid metabolism. Its function is as follows. Prenyltransferase that catalyzes the transfer of the geranylgeranyl moiety of geranylgeranyl diphosphate (GGPP) to the C3 hydroxyl of sn-glycerol-1-phosphate (G1P). This reaction is the first ether-bond-formation step in the biosynthesis of archaeal membrane lipids. This chain is Geranylgeranylglyceryl phosphate synthase, found in Methanobrevibacter smithii (strain ATCC 35061 / DSM 861 / OCM 144 / PS).